The primary structure comprises 235 residues: Cobalt transport protein CbiM (235 aa).

Residues 1–33 form the signal peptide; the sequence is MRYLKFFLLLVFLVPSFGFSMHIMEGFLPPTHA. Helical transmembrane passes span 34–51, 63–83, 95–115, 118–138, 156–176, and 199–219; these read LIWY…LFTI, MLLA…IPSV, LGAI…VLLF, LLLA…MAIV, NIAV…TTSF, and IFAI…VVVI.

The protein belongs to the CbiM family. As to quaternary structure, forms an energy-coupling factor (ECF) transporter complex composed of an ATP-binding protein (A component, CbiO), a transmembrane protein (T component, CbiQ) and 2 possible substrate-capture proteins (S components, CbiM and CbiN) of unknown stoichimetry.

The protein resides in the cell inner membrane. The protein operates within cofactor biosynthesis; adenosylcobalamin biosynthesis. In terms of biological role, part of the energy-coupling factor (ECF) transporter complex CbiMNOQ involved in cobalt import. The chain is Cobalt transport protein CbiM from Thermosipho melanesiensis (strain DSM 12029 / CIP 104789 / BI429).